A 189-amino-acid polypeptide reads, in one-letter code: Threonylcarbamoyl-AMP synthase (189 aa).

The YrdC-like domain occupies 6-189 (SPAFESVLTA…ALTGELYRQG (184 aa)).

This sequence belongs to the SUA5 family. TsaC subfamily.

It localises to the cytoplasm. It carries out the reaction L-threonine + hydrogencarbonate + ATP = L-threonylcarbamoyladenylate + diphosphate + H2O. In terms of biological role, required for the formation of a threonylcarbamoyl group on adenosine at position 37 (t(6)A37) in tRNAs that read codons beginning with adenine. Catalyzes the conversion of L-threonine, HCO(3)(-)/CO(2) and ATP to give threonylcarbamoyl-AMP (TC-AMP) as the acyladenylate intermediate, with the release of diphosphate. This chain is Threonylcarbamoyl-AMP synthase, found in Photorhabdus laumondii subsp. laumondii (strain DSM 15139 / CIP 105565 / TT01) (Photorhabdus luminescens subsp. laumondii).